A 337-amino-acid chain; its full sequence is Protein ABHD13 (337 aa).

A helical; Signal-anchor for type II membrane protein transmembrane segment spans residues 37 to 57 (FHLYGGIVLLLLIFVSIAGIL). Residues serine 193, aspartate 268, and histidine 298 each act as charge relay system in the active site. An N-linked (GlcNAc...) asparagine glycan is attached at asparagine 299.

This sequence belongs to the serine esterase family.

It localises to the membrane. The sequence is that of Protein ABHD13 from Mus musculus (Mouse).